A 1006-amino-acid polypeptide reads, in one-letter code: E3 ubiquitin-protein ligase MIB1 (1006 aa).

An MIB/HERC2 1 domain is found at 6–74 (NNRVMVEGVG…AYDLRILDSA (69 aa)). The ZZ-type zinc-finger motif lies at 80 to 132 (HDGTMCDTCRQQPIIGIRWKCAECTNYDLCTVCYHGDKHHLRHRFYRITTPGS). Positions 85, 88, 100, 103, 109, 112, 118, and 122 each coordinate Zn(2+). The 79-residue stretch at 143–221 (SKKITARGIF…MSDLKCVQDA (79 aa)) folds into the MIB/HERC2 2 domain. At Ser-408 the chain carries Phosphoserine. 9 ANK repeats span residues 430-460 (DLNE…DVNG), 463-492 (AGHT…DVEA), 496-525 (DGDR…DLNA), 529-558 (RRQT…HPSL), 562-591 (EGDT…DVTI), 595-627 (NGFN…IVDE), 631-661 (DGYT…NLDI), 665-694 (NQQT…KLDI), and 698-729 (DGDT…KVDA). 2 RING-type zinc fingers span residues 819-854 (CMVC…LICK) and 866-901 (CVVC…VQCR). Residues 935-962 (QKDKDNTNVNADVQKLQQQLQDIKEQTM) are a coiled coil. An RING-type 3 zinc finger spans residues 963 to 996 (CPVCLDRLKNMIFLCGHGTCQLCGDRMSECPICR).

In terms of assembly, interacts with CEP131 and PCM1. In terms of processing, ubiquitinated; possibly via autoubiquitination. Ubiquitinated; this modification is inhibited in response to cellular stress, such as ultraviolet light (UV) radiation or heat shock. Widely expressed at low level. Expressed at higher level in spinal cord, ovary, whole brain, and all specific brain regions examined.

Its subcellular location is the cytoplasm. It is found in the cytoskeleton. It localises to the microtubule organizing center. The protein localises to the centrosome. The protein resides in the centriolar satellite. Its subcellular location is the cell membrane. The enzyme catalyses S-ubiquitinyl-[E2 ubiquitin-conjugating enzyme]-L-cysteine + [acceptor protein]-L-lysine = [E2 ubiquitin-conjugating enzyme]-L-cysteine + N(6)-ubiquitinyl-[acceptor protein]-L-lysine.. It functions in the pathway protein modification; protein ubiquitination. E3 ubiquitin-protein ligase that mediates ubiquitination of Delta receptors, which act as ligands of Notch proteins. Positively regulates the Delta-mediated Notch signaling by ubiquitinating the intracellular domain of Delta, leading to endocytosis of Delta receptors. Probably mediates ubiquitination and subsequent proteasomal degradation of DAPK1, thereby antagonizing anti-apoptotic effects of DAPK1 to promote TNF-induced apoptosis. Involved in ubiquitination of centriolar satellite CEP131, CEP290 and PCM1 proteins and hence inhibits primary cilium formation in proliferating cells. Mediates 'Lys-63'-linked polyubiquitination of TBK1, which probably participates in kinase activation. Functionally, (Microbial infection) During adenovirus infection, mediates ubiquitination of Core-capsid bridging protein. This allows viral genome delivery into nucleus for infection. In Homo sapiens (Human), this protein is E3 ubiquitin-protein ligase MIB1 (MIB1).